We begin with the raw amino-acid sequence, 67 residues long: Large ribosomal subunit protein bL35 (67 aa).

Over residues 1–16 the composition is skewed to basic residues; sequence MPKMKTKKSAAKRFRV. The segment at 1-22 is disordered; that stretch reads MPKMKTKKSAAKRFRVRPGGTV.

It belongs to the bacterial ribosomal protein bL35 family.

The chain is Large ribosomal subunit protein bL35 from Methylibium petroleiphilum (strain ATCC BAA-1232 / LMG 22953 / PM1).